Here is a 321-residue protein sequence, read N- to C-terminus: Phospho-N-acetylmuramoyl-pentapeptide-transferase (321 aa).

10 helical membrane passes run 6-26 (MLIP…LFIG), 53-73 (TMGG…VGIW), 77-97 (LTLS…LGFY), 121-141 (ILGA…HTLW), 144-164 (IIGN…WLVG), 175-195 (LDGL…IIAA), 200-220 (TDVL…LMFN), 226-246 (IFMG…VAIL), 251-271 (WSLL…ILQV), and 301-321 (IDLT…AFFL).

Belongs to the glycosyltransferase 4 family. MraY subfamily. Mg(2+) is required as a cofactor.

The protein resides in the cell membrane. It catalyses the reaction UDP-N-acetyl-alpha-D-muramoyl-L-alanyl-gamma-D-glutamyl-L-lysyl-D-alanyl-D-alanine + di-trans,octa-cis-undecaprenyl phosphate = Mur2Ac(oyl-L-Ala-gamma-D-Glu-L-Lys-D-Ala-D-Ala)-di-trans,octa-cis-undecaprenyl diphosphate + UMP. The protein operates within cell wall biogenesis; peptidoglycan biosynthesis. Functionally, catalyzes the initial step of the lipid cycle reactions in the biosynthesis of the cell wall peptidoglycan: transfers peptidoglycan precursor phospho-MurNAc-pentapeptide from UDP-MurNAc-pentapeptide onto the lipid carrier undecaprenyl phosphate, yielding undecaprenyl-pyrophosphoryl-MurNAc-pentapeptide, known as lipid I. This is Phospho-N-acetylmuramoyl-pentapeptide-transferase from Lacticaseibacillus paracasei (strain ATCC 334 / BCRC 17002 / CCUG 31169 / CIP 107868 / KCTC 3260 / NRRL B-441) (Lactobacillus paracasei).